The chain runs to 71 residues: Mitotic-spindle organizing protein 1 (71 aa).

This sequence belongs to the MOZART1 family. Part of the gamma-tubulin complex.

The protein resides in the cytoplasm. The protein localises to the cytoskeleton. It is found in the microtubule organizing center. Its subcellular location is the spindle pole body. Its function is as follows. Required for gamma-tubulin complex recruitment to the microtubule organizing center (MTOC). The sequence is that of Mitotic-spindle organizing protein 1 from Aspergillus clavatus (strain ATCC 1007 / CBS 513.65 / DSM 816 / NCTC 3887 / NRRL 1 / QM 1276 / 107).